We begin with the raw amino-acid sequence, 331 residues long: Cytosolic Fe-S cluster assembly factor CFD1 (331 aa).

Position 25–32 (25–32) interacts with ATP; sequence GKGGVGKS. 2 residues coordinate [4Fe-4S] cluster: Cys-211 and Cys-214.

This sequence belongs to the Mrp/NBP35 ATP-binding proteins family. NUBP2/CFD1 subfamily. In terms of assembly, heterotetramer of 2 NBP35 and 2 CFD1 chains. Requires [4Fe-4S] cluster as cofactor.

The protein localises to the cytoplasm. Component of the cytosolic iron-sulfur (Fe/S) protein assembly (CIA) machinery. Required for maturation of extramitochondrial Fe-S proteins. The NBP35-CFD1 heterotetramer forms a Fe-S scaffold complex, mediating the de novo assembly of an Fe-S cluster and its transfer to target apoproteins. This chain is Cytosolic Fe-S cluster assembly factor CFD1, found in Cryptococcus neoformans var. neoformans serotype D (strain B-3501A) (Filobasidiella neoformans).